The chain runs to 224 residues: Artemin (224 aa).

The signal sequence occupies residues 1–39 (MELGLAEPTALSHCLRPRWQSAWWPTLAVLALLSCVTEA). A propeptide spanning residues 40–111 (SLDPMSRSPA…AALRGARAAR (72 aa)) is cleaved from the precursor. Residues 43-124 (PMSRSPAARD…RSSRARTTDA (82 aa)) are disordered. Pro residues predominate over residues 80–95 (RPPPQSPQPAPPPPGP). Low complexity predominate over residues 96–116 (ALQSPPAALRGARAARAGTRS). 3 disulfides stabilise this stretch: cysteine 127–cysteine 192, cysteine 154–cysteine 220, and cysteine 158–cysteine 222. Asparagine 206 is a glycosylation site (N-linked (GlcNAc...) asparagine).

The protein belongs to the TGF-beta family. GDNF subfamily. In terms of assembly, homodimer; disulfide-linked. Interacts with GFRA3 coreceptor and RET: forms a 2:2:2 ternary complex composed of ARTN ligand, GFRA3 and RET receptor.

The protein resides in the secreted. Its function is as follows. Growth factor that supports the survival of sensory and sympathetic peripheral neurons in culture and also supports the survival of dopaminergic neurons of the ventral mid-brain. Acts by binding to its coreceptor, GFRA3, leading to autophosphorylation and activation of the RET receptor. Strong attractant of gut hematopoietic cells thus promoting the formation Peyer's patch-like structures, a major component of the gut-associated lymphoid tissue. In Mus musculus (Mouse), this protein is Artemin.